Reading from the N-terminus, the 310-residue chain is Small ribosomal subunit biogenesis GTPase RsgA (310 aa).

One can recognise a CP-type G domain in the interval 77 to 236; the sequence is KNELKRPNIA…IADTPGFSKL (160 aa). Residues 126–129 and 179–187 each bind GTP; these read SKID and GQTGVGKST. Residues Cys260, Cys266, His268, and Cys274 each contribute to the Zn(2+) site.

The protein belongs to the TRAFAC class YlqF/YawG GTPase family. RsgA subfamily. Monomer. Associates with 30S ribosomal subunit, binds 16S rRNA. Zn(2+) serves as cofactor.

It is found in the cytoplasm. Functionally, one of several proteins that assist in the late maturation steps of the functional core of the 30S ribosomal subunit. Helps release RbfA from mature subunits. May play a role in the assembly of ribosomal proteins into the subunit. Circularly permuted GTPase that catalyzes slow GTP hydrolysis, GTPase activity is stimulated by the 30S ribosomal subunit. The protein is Small ribosomal subunit biogenesis GTPase RsgA of Phytoplasma australiense.